The chain runs to 490 residues: tRNA-guanine(15) transglycosylase (490 aa).

Catalysis depends on Asp90, which acts as the Nucleophile. Substrate-binding residues include Asp125 and Ala193. Zn(2+) is bound by residues Cys276, Cys278, and Cys281.

This sequence belongs to the archaeosine tRNA-ribosyltransferase family. Requires Zn(2+) as cofactor.

It catalyses the reaction guanosine(15) in tRNA + 7-cyano-7-deazaguanine = 7-cyano-7-carbaguanosine(15) in tRNA + guanine. Its pathway is tRNA modification; archaeosine-tRNA biosynthesis. In terms of biological role, exchanges the guanine residue with 7-cyano-7-deazaguanine (preQ0) at position 15 in the dihydrouridine loop (D-loop) of archaeal tRNAs. The chain is tRNA-guanine(15) transglycosylase from Methanosarcina barkeri (strain Fusaro / DSM 804).